The following is a 450-amino-acid chain: Acyltransferase GLAUCE (450 aa).

Active-site proton acceptor residues include His171 and Glu394.

Belongs to the plant acyltransferase family. Restricted to the central cells of embryo sacs.

It localises to the cytoplasm. It is found in the nucleus. In terms of biological role, required for double fertilization of the egg cell and the central cell by two sperm cells, resulting in the formation of the embryo and the endosperm. Involved in the regulation of embryonic expression of PHE1. Essential in maternal tissues to ensure the paternal embryonic expression of several genes, including RPS5a and FAC1, both of which being essential for early embryo and endosperm development in fertilized seeds. This is Acyltransferase GLAUCE from Arabidopsis thaliana (Mouse-ear cress).